The chain runs to 818 residues: Cytosolic phospholipase A2 delta (818 aa).

In terms of domain architecture, C2 spans 5–124 (SPGGPPGHPY…LPGKLLRKTF (120 aa)). 5 residues coordinate Ca(2+): Asp38, Asp44, Asp94, Asp96, and Asp102. Residues 273–818 (GCPEELAVHL…LEARPPRAQT (546 aa)) enclose the PLA2c domain. A substrate-binding site is contributed by 330-331 (GG). The active-site Nucleophile is the Ser361. Residue Asp647 is the Proton acceptor of the active site.

The cofactor is Ca(2+). Expressed in stratified squamous epithelia, such as those in skin and cervix, but not in other tissues. Strongly expressed in the upper spinous layer of the psoriatic epidermis, expressed weakly and discontinuously in atopic dermatitis and mycosis fungoides, and not detected in the epidermis of normal skin.

The protein localises to the cytoplasm. It localises to the cytosol. Its subcellular location is the membrane. It catalyses the reaction a 1,2-diacyl-sn-glycero-3-phosphocholine + H2O = a 1-acyl-sn-glycero-3-phosphocholine + a fatty acid + H(+). The enzyme catalyses 1-hexadecanoyl-2-(5Z,8Z,11Z,14Z-eicosatetraenoyl)-sn-glycero-3-phosphocholine + H2O = 1-hexadecanoyl-sn-glycero-3-phosphocholine + (5Z,8Z,11Z,14Z)-eicosatetraenoate + H(+). It carries out the reaction 1-hexadecanoyl-2-(9Z,12Z-octadecadienoyl)-sn-glycero-3-phosphocholine + H2O = (9Z,12Z)-octadecadienoate + 1-hexadecanoyl-sn-glycero-3-phosphocholine + H(+). The catalysed reaction is 1-hexadecanoyl-2-(9Z-octadecenoyl)-sn-glycero-3-phosphocholine + H2O = 1-hexadecanoyl-sn-glycero-3-phosphocholine + (9Z)-octadecenoate + H(+). It catalyses the reaction 1-hexadecanoyl-2-(5Z,8Z,11Z,14Z-eicosatetraenoyl)-sn-glycero-3-phosphoethanolamine + H2O = 1-hexadecanoyl-sn-glycero-3-phosphoethanolamine + (5Z,8Z,11Z,14Z)-eicosatetraenoate + H(+). The enzyme catalyses 1-hexadecanoyl-2-(9Z,12Z-octadecadienoyl)-sn-glycero-3-phosphoethanolamine + H2O = 1-hexadecanoyl-sn-glycero-3-phosphoethanolamine + (9Z,12Z)-octadecadienoate + H(+). The protein operates within lipid metabolism; fatty acid metabolism. With respect to regulation, stimulated by cytosolic Ca(2+). Functionally, calcium-dependent phospholipase A2 that selectively hydrolyzes glycerophospholipids in the sn-2 position. Has a preference for linoleic acid at the sn-2 position. This chain is Cytosolic phospholipase A2 delta, found in Homo sapiens (Human).